The chain runs to 103 residues: Large ribosomal subunit protein bL21 (103 aa).

The protein belongs to the bacterial ribosomal protein bL21 family. As to quaternary structure, part of the 50S ribosomal subunit. Contacts protein L20.

In terms of biological role, this protein binds to 23S rRNA in the presence of protein L20. In Chromohalobacter salexigens (strain ATCC BAA-138 / DSM 3043 / CIP 106854 / NCIMB 13768 / 1H11), this protein is Large ribosomal subunit protein bL21.